The following is a 168-amino-acid chain: Phospholipase A and acyltransferase 1 (168 aa).

Residues 1–138 (MAFNDCFSLN…GEGVSEQANR (138 aa)) lie on the Cytoplasmic side of the membrane. The LRAT domain occupies 20–135 (LIEVFRPGYQ…LRYGEGVSEQ (116 aa)). Histidine 30 is a catalytic residue. Cysteine 119 functions as the Acyl-thioester intermediate in the catalytic mechanism. The helical transmembrane segment at 139–159 (AISTVEFVTAAVGVFSFLGLF) threads the bilayer. The Lumenal portion of the chain corresponds to 160–168 (PKGQRAKYY).

This sequence belongs to the H-rev107 family. Abundantly expressed in testis, skeletal muscle, brain, and heart. In terms of tissue distribution, highly expressed in the testis, skeletal muscle, brain, heart, and thyroid.

The protein resides in the membrane. Its subcellular location is the cytoplasm. It is found in the nucleus. The enzyme catalyses a 1,2-diacyl-sn-glycero-3-phosphocholine + H2O = a 1-acyl-sn-glycero-3-phosphocholine + a fatty acid + H(+). The catalysed reaction is a 1,2-diacyl-sn-glycero-3-phosphocholine + H2O = a 2-acyl-sn-glycero-3-phosphocholine + a fatty acid + H(+). It catalyses the reaction 1,2-dihexadecanoyl-sn-glycero-3-phosphocholine + H2O = 2-hexadecanoyl-sn-glycero-3-phosphocholine + hexadecanoate + H(+). It carries out the reaction 1,2-dihexadecanoyl-sn-glycero-3-phosphocholine + H2O = 1-hexadecanoyl-sn-glycero-3-phosphocholine + hexadecanoate + H(+). The enzyme catalyses 1-hexadecanoyl-2-(5Z,8Z,11Z,14Z-eicosatetraenoyl)-sn-glycero-3-phosphoethanolamine + H2O = 2-(5Z,8Z,11Z,14Z)-eicosatetraenoyl-sn-glycero-3-phosphoethanolamine + hexadecanoate + H(+). The catalysed reaction is 1-hexadecanoyl-2-(5Z,8Z,11Z,14Z-eicosatetraenoyl)-sn-glycero-3-phosphoethanolamine + H2O = 1-hexadecanoyl-sn-glycero-3-phosphoethanolamine + (5Z,8Z,11Z,14Z)-eicosatetraenoate + H(+). It catalyses the reaction 1,2-di-(9Z-octadecenoyl)-sn-glycero-3-phosphoethanolamine + 1,2-dihexadecanoyl-sn-glycero-3-phosphocholine = hexadecanoyl-sn-glycero-3-phosphocholine + N-hexadecanoyl-1,2-di-(9Z-octadecenoyl)-sn-glycero-3-phosphoethanolamine + H(+). It carries out the reaction 1,2-dihexadecanoyl-sn-glycero-3-phosphocholine + a 2-acyl-sn-glycero-3-phosphocholine = a 1-hexadecanoyl-2-acyl-sn-glycero-3-phosphocholine + 2-hexadecanoyl-sn-glycero-3-phosphocholine. Its function is as follows. Exhibits both phospholipase A1/2 and acyltransferase activities. Shows phospholipase A1 (PLA1) and A2 (PLA2) activity, catalyzing the calcium-independent release of fatty acids from the sn-1 or sn-2 position of glycerophospholipids. Shows O-acyltransferase activity, catalyzing the transfer of a fatty acyl group from glycerophospholipid to the hydroxyl group of lysophospholipid. Shows N-acyltransferase activity, catalyzing the calcium-independent transfer of a fatty acyl group at the sn-1 position of phosphatidylcholine (PC) and other glycerophospholipids to the primary amine of phosphatidylethanolamine (PE), forming N-acylphosphatidylethanolamine (NAPE) which serves as precursor for N-acylethanolamines (NAEs). This chain is Phospholipase A and acyltransferase 1, found in Homo sapiens (Human).